The chain runs to 156 residues: Small ribosomal subunit protein uS7 (156 aa).

The protein belongs to the universal ribosomal protein uS7 family. Part of the 30S ribosomal subunit. Contacts proteins S9 and S11.

One of the primary rRNA binding proteins, it binds directly to 16S rRNA where it nucleates assembly of the head domain of the 30S subunit. Is located at the subunit interface close to the decoding center, probably blocks exit of the E-site tRNA. The sequence is that of Small ribosomal subunit protein uS7 from Myxococcus xanthus (strain DK1622).